Consider the following 181-residue polypeptide: Large ribosomal subunit protein uL5 (181 aa).

It belongs to the universal ribosomal protein uL5 family. As to quaternary structure, part of the 50S ribosomal subunit; part of the 5S rRNA/L5/L18/L25 subcomplex. Contacts the 5S rRNA and the P site tRNA. Forms a bridge to the 30S subunit in the 70S ribosome.

In terms of biological role, this is one of the proteins that bind and probably mediate the attachment of the 5S RNA into the large ribosomal subunit, where it forms part of the central protuberance. In the 70S ribosome it contacts protein S13 of the 30S subunit (bridge B1b), connecting the 2 subunits; this bridge is implicated in subunit movement. Contacts the P site tRNA; the 5S rRNA and some of its associated proteins might help stabilize positioning of ribosome-bound tRNAs. This Helicobacter pylori (strain Shi470) protein is Large ribosomal subunit protein uL5.